A 270-amino-acid chain; its full sequence is Maximins-S type D (270 aa).

Positions 1-18 (MNFNYFILVLFFITSGHA) are cleaved as a signal peptide. 2 propeptides span residues 19-35 (KSET…HIKR) and 52-65 (SAEE…LVTR). The residue at position 83 (Asn-83) is an Asparagine amide. The propeptide occupies 87–100 (SAEEQDLAEDLVTR). Lys-118 is modified (lysine amide). Residues 122–135 (SAEDQDLAEDLVTR) constitute a propeptide that is removed on maturation. Residue Asn-153 is modified to Asparagine amide. A propeptide spanning residues 157–170 (SAEEQDLAEHLVTR) is cleaved from the precursor. Asn-188 is modified (asparagine amide). The propeptide occupies 192–205 (SAEEQDLVEDLVTR). Lys-223 bears the Lysine amide mark. The propeptide occupies 227–240 (SAEEQDLAEDLVTR). Lys-258 carries the post-translational modification Lysine amide. Residues 262 to 270 (SAEQEKDMK) constitute a propeptide that is removed on maturation.

It belongs to the maximin-S family. Expressed by the skin dorsal glands.

The protein localises to the secreted. Functionally, maximin-S1 has no antimicrobial activity. Has no hemolytic activity. Its function is as follows. Maximin-S2 has an activity against mycoplasma but has no activity against common Gram-positive and Gram-negative bacteria nor fungi. Has no hemolytic activity. Maximin-S3 has an activity against mycoplasma but has no activity against common Gram-positive and Gram-negative bacteria nor fungi. Has no hemolytic activity. In terms of biological role, maximin-S4 has an activity against mycoplasma but has no activity against common Gram-positive and Gram-negative bacteria nor fungi. Has no hemolytic activity. Functionally, maximin-S5 has an activity against mycoplasma but has no activity against common Gram-positive and Gram-negative bacteria nor fungi. Has no hemolytic activity. The protein is Maximins-S type D of Bombina maxima (Giant fire-bellied toad).